Consider the following 367-residue polypeptide: Cytochrome P450 119 (367 aa).

Residues H76, R80, T257, R259, H315, and C317 each contribute to the heme site.

Belongs to the cytochrome P450 family. Heme is required as a cofactor.

The protein localises to the cytoplasm. In Sulfurisphaera tokodaii (strain DSM 16993 / JCM 10545 / NBRC 100140 / 7) (Sulfolobus tokodaii), this protein is Cytochrome P450 119 (cyp119).